A 516-amino-acid chain; its full sequence is Golgin-84 (516 aa).

Residues 1 to 492 (MSSWITGLAD…TFLRRYPMMR (492 aa)) lie on the Cytoplasmic side of the membrane. Residues 28 to 80 (QTENATGSADPMRRSMTSSTQSLSTSLKSTLSPVRRSGANSSSSVKSDGGVSV) form a disordered region. The span at 42–80 (SMTSSTQSLSTSLKSTLSPVRRSGANSSSSVKSDGGVSV) shows a compositional bias: low complexity. Phosphoserine occurs at positions 64 and 74. Residues 108-423 (TNELAAFKIA…KAQTQLQQNM (316 aa)) adopt a coiled-coil conformation. Residues 493–513 (VSVIVYVALLHLWVMFVLLST) traverse the membrane as a helical; Anchor for type IV membrane protein segment. Over 514 to 516 (TPN) the chain is Lumenal.

It is found in the golgi apparatus membrane. Its function is as follows. May be involved in maintaining Golgi structure and in intra-Golgi transport. The polypeptide is Golgin-84 (Golgin84) (Drosophila melanogaster (Fruit fly)).